Reading from the N-terminus, the 100-residue chain is Urease subunit gamma (100 aa).

Belongs to the urease gamma subunit family. As to quaternary structure, heterotrimer of UreA (gamma), UreB (beta) and UreC (alpha) subunits. Three heterotrimers associate to form the active enzyme.

The protein resides in the cytoplasm. The enzyme catalyses urea + 2 H2O + H(+) = hydrogencarbonate + 2 NH4(+). The protein operates within nitrogen metabolism; urea degradation; CO(2) and NH(3) from urea (urease route): step 1/1. The chain is Urease subunit gamma from Chromohalobacter salexigens (strain ATCC BAA-138 / DSM 3043 / CIP 106854 / NCIMB 13768 / 1H11).